We begin with the raw amino-acid sequence, 82 residues long: MVDINQIPTRRPFHRRRKTCPFSGANAPKIDYKDVKLLQRYISERGKIVPSRITAVSQKKQRELAKAIKRARFLGLLPYVVK.

A disordered region spans residues 1–20; sequence MVDINQIPTRRPFHRRRKTC.

The protein belongs to the bacterial ribosomal protein bS18 family. In terms of assembly, part of the 30S ribosomal subunit. Forms a tight heterodimer with protein bS6.

Binds as a heterodimer with protein bS6 to the central domain of the 16S rRNA, where it helps stabilize the platform of the 30S subunit. This chain is Small ribosomal subunit protein bS18, found in Brucella abortus (strain 2308).